A 327-amino-acid chain; its full sequence is Methionyl-tRNA formyltransferase (327 aa).

Residue 121–124 (SLLP) participates in (6S)-5,6,7,8-tetrahydrofolate binding.

This sequence belongs to the Fmt family.

The catalysed reaction is L-methionyl-tRNA(fMet) + (6R)-10-formyltetrahydrofolate = N-formyl-L-methionyl-tRNA(fMet) + (6S)-5,6,7,8-tetrahydrofolate + H(+). In terms of biological role, attaches a formyl group to the free amino group of methionyl-tRNA(fMet). The formyl group appears to play a dual role in the initiator identity of N-formylmethionyl-tRNA by promoting its recognition by IF2 and preventing the misappropriation of this tRNA by the elongation apparatus. The polypeptide is Methionyl-tRNA formyltransferase (Paraburkholderia phymatum (strain DSM 17167 / CIP 108236 / LMG 21445 / STM815) (Burkholderia phymatum)).